The chain runs to 371 residues: N-acetyldiaminopimelate deacetylase (371 aa).

The active site involves Asp68. Glu127 (proton acceptor) is an active-site residue.

Belongs to the peptidase M20A family. N-acetyldiaminopimelate deacetylase subfamily.

The catalysed reaction is N-acetyl-(2S,6S)-2,6-diaminopimelate + H2O = (2S,6S)-2,6-diaminopimelate + acetate. The protein operates within amino-acid biosynthesis; L-lysine biosynthesis via DAP pathway; LL-2,6-diaminopimelate from (S)-tetrahydrodipicolinate (acetylase route): step 3/3. Its function is as follows. Catalyzes the conversion of N-acetyl-diaminopimelate to diaminopimelate and acetate. The chain is N-acetyldiaminopimelate deacetylase from Listeria welshimeri serovar 6b (strain ATCC 35897 / DSM 20650 / CCUG 15529 / CIP 8149 / NCTC 11857 / SLCC 5334 / V8).